The primary structure comprises 924 residues: MDYKETLLMPKTDFPMRGNLPKREPEMQKKWEEMDIYRKVQERTKGRPLFVLHDGPPYANGDIHMGHALNKILKDIIVRYKSMSGYCAPYVPGWDTHGLPIETALAKQGVDRKSMSVAEFRKRCEQYAYEQIDNQRRQFKRLGVRGDWDNPYITLKPEYEAQQIKVFGEMAKKGLIYKGLKPVYWSPSSESALAEAEIEYKDKRSPSIYVAFPVKNGKGVLEGDERIVIWTTTPWTIPANLAIAVHPDLDYHVVDVSGKRYVVAAALAESVAKEIGWDAWSVVKTVKGKELEYVVARHPFYERDSLVVCGEHVTTDAGTGCVHTAPGHGEDDFLVGQKYGLPVLCPVDERGYMTEEAPGFAGMFYEDANKAITQKLEEVGALLKLGFITHSYPHDWRTKQPTIFRATTQWFASIDKIRNELLQAIKETKWIPEWGEIRIHNMVRDRGDWCISRQRAWGVPIPVFYGENGEPIITDETIEHVSNLFRQYGSNVWFEREAKDLLPEGFTHPSSPNGIFTKETDIMDVWFDSGSSHQAVLVERDDLVRPADLYLEGSDQYRGWFNSSLSTAVAVTGKAPYKGVLSHGFVLDGEGRKMSKSLGNVVVPAKVMEQFGADILRLWVASVDYQADVRISDHILKQVSEVYRKIRNTFRFMLGNLFDFDPNQNAVPIGELGEVDRYMLAKLNKLIAKVKKAYDSYDFAAVYHEMNHFCTVELSAFYLDMAKDILYIEAADSRARRAVQTVLYETVVALAKLIAPILPHTADEVWEHIPNRRENVESVQLTDMPEPIAIDGEEALLAKWDAFMDVRDDIFKALENARNEKVIGKSLTASVIVYPKDEARKLLASLDADLRQLLIVSAFSIADEPYDAAPAEAERLDHVAVIVRPAEGETCERCWTVTKEVGADPSHPTLCPRCAHIVNEHYSA.

The 'HIGH' region motif lies at 57–67; the sequence is PYANGDIHMGH. Glu552 is an L-isoleucyl-5'-AMP binding site. A 'KMSKS' region motif is present at residues 593–597; the sequence is KMSKS. ATP is bound at residue Lys596. Residues Cys891, Cys894, Cys911, and Cys914 each coordinate Zn(2+).

The protein belongs to the class-I aminoacyl-tRNA synthetase family. IleS type 1 subfamily. In terms of assembly, monomer. It depends on Zn(2+) as a cofactor.

Its subcellular location is the cytoplasm. It carries out the reaction tRNA(Ile) + L-isoleucine + ATP = L-isoleucyl-tRNA(Ile) + AMP + diphosphate. In terms of biological role, catalyzes the attachment of isoleucine to tRNA(Ile). As IleRS can inadvertently accommodate and process structurally similar amino acids such as valine, to avoid such errors it has two additional distinct tRNA(Ile)-dependent editing activities. One activity is designated as 'pretransfer' editing and involves the hydrolysis of activated Val-AMP. The other activity is designated 'posttransfer' editing and involves deacylation of mischarged Val-tRNA(Ile). The polypeptide is Isoleucine--tRNA ligase (Geobacillus kaustophilus (strain HTA426)).